The following is a 349-amino-acid chain: Galactose-1-phosphate uridylyltransferase (349 aa).

29–32 (RAKR) contacts UDP-alpha-D-glucose. 2 residues coordinate Zn(2+): cysteine 53 and cysteine 56. Residue 78–79 (ND) participates in UDP-alpha-D-glucose binding. Histidine 116 contacts Zn(2+). Residues asparagine 154 and 160–162 (GCS) each bind UDP-alpha-D-glucose. Histidine 165 lines the Zn(2+) pocket. Catalysis depends on histidine 167, which acts as the Tele-UMP-histidine intermediate. Position 169 (glutamine 169) interacts with UDP-alpha-D-glucose. 4 residues coordinate Fe cation: glutamate 183, histidine 282, histidine 297, and histidine 299. UDP-alpha-D-glucose contacts are provided by residues 312 to 313 (KF), 317 to 318 (YE), and glutamine 324.

Belongs to the galactose-1-phosphate uridylyltransferase type 1 family. Zn(2+) serves as cofactor.

The catalysed reaction is alpha-D-galactose 1-phosphate + UDP-alpha-D-glucose = alpha-D-glucose 1-phosphate + UDP-alpha-D-galactose. It participates in carbohydrate metabolism; galactose metabolism. The sequence is that of Galactose-1-phosphate uridylyltransferase (galT) from Haemophilus influenzae (strain ATCC 51907 / DSM 11121 / KW20 / Rd).